The sequence spans 227 residues: Phosphoribosylformylglycinamidine synthase subunit PurQ (227 aa).

In terms of domain architecture, Glutamine amidotransferase type-1 spans 3-225 (FAVIVFPGSN…LRNWRESHVV (223 aa)). The Nucleophile role is filled by cysteine 86. Active-site residues include histidine 194 and glutamate 196.

As to quaternary structure, part of the FGAM synthase complex composed of 1 PurL, 1 PurQ and 2 PurS subunits.

It localises to the cytoplasm. It carries out the reaction N(2)-formyl-N(1)-(5-phospho-beta-D-ribosyl)glycinamide + L-glutamine + ATP + H2O = 2-formamido-N(1)-(5-O-phospho-beta-D-ribosyl)acetamidine + L-glutamate + ADP + phosphate + H(+). The catalysed reaction is L-glutamine + H2O = L-glutamate + NH4(+). Its pathway is purine metabolism; IMP biosynthesis via de novo pathway; 5-amino-1-(5-phospho-D-ribosyl)imidazole from N(2)-formyl-N(1)-(5-phospho-D-ribosyl)glycinamide: step 1/2. Part of the phosphoribosylformylglycinamidine synthase complex involved in the purines biosynthetic pathway. Catalyzes the ATP-dependent conversion of formylglycinamide ribonucleotide (FGAR) and glutamine to yield formylglycinamidine ribonucleotide (FGAM) and glutamate. The FGAM synthase complex is composed of three subunits. PurQ produces an ammonia molecule by converting glutamine to glutamate. PurL transfers the ammonia molecule to FGAR to form FGAM in an ATP-dependent manner. PurS interacts with PurQ and PurL and is thought to assist in the transfer of the ammonia molecule from PurQ to PurL. This Halalkalibacterium halodurans (strain ATCC BAA-125 / DSM 18197 / FERM 7344 / JCM 9153 / C-125) (Bacillus halodurans) protein is Phosphoribosylformylglycinamidine synthase subunit PurQ.